The primary structure comprises 169 residues: Protein AIG2 B (169 aa).

15–20 (YGSFQE) provides a ligand contact to substrate. Residue Glu83 is the Proton acceptor of the active site.

It belongs to the gamma-glutamylcyclotransferase family. In terms of tissue distribution, expressed in roots, leaves and stems.

Functionally, putative gamma-glutamylcyclotransferase. In Arabidopsis thaliana (Mouse-ear cress), this protein is Protein AIG2 B.